Reading from the N-terminus, the 603-residue chain is Coiled-coil domain-containing protein 148 (603 aa).

2 coiled-coil regions span residues 365 to 429 (LAKD…KKKK) and 461 to 510 (EQSL…KQVA).

The protein is Coiled-coil domain-containing protein 148 (CCDC148) of Macaca fascicularis (Crab-eating macaque).